Here is a 223-residue protein sequence, read N- to C-terminus: Type 3 secretion system stator protein (223 aa).

The protein belongs to the SctL stator family. The core secretion machinery of the T3SS is composed of approximately 20 different proteins, including cytoplasmic components, a base, an export apparatus and a needle. This subunit is part of the cytosolic complex. Interacts directly with YscN/SctN (T3SS ATPase) and YscQ/SctQ (the major sorting platform component). Forms homodimers.

Its subcellular location is the cytoplasm. Its function is as follows. Component of the type III secretion system (T3SS), also called injectisome, which is used to inject bacterial effector proteins into eukaryotic host cells. Acts as a regulator of the YscN/SctN ATPase activity. Overexpression of YscL/SctL abolishes type III secretion and down-regulates the expression of secretion apparatus components. This Yersinia enterocolitica protein is Type 3 secretion system stator protein.